A 400-amino-acid chain; its full sequence is Enoyl-[acyl-carrier-protein] reductase [NADH] 1 (400 aa).

NAD(+) is bound by residues Gly48–Tyr53, Phe74–Glu75, Asp111–Ala112, and Leu139–Ala140. Substrate is bound at residue Tyr225. Tyr235 serves as the catalytic Proton donor. Residues Lys244 and Val273–Thr275 contribute to the NAD(+) site.

This sequence belongs to the TER reductase family. Monomer.

The enzyme catalyses a 2,3-saturated acyl-[ACP] + NAD(+) = a (2E)-enoyl-[ACP] + NADH + H(+). The protein operates within lipid metabolism; fatty acid biosynthesis. In terms of biological role, involved in the final reduction of the elongation cycle of fatty acid synthesis (FAS II). Catalyzes the reduction of a carbon-carbon double bond in an enoyl moiety that is covalently linked to an acyl carrier protein (ACP). This is Enoyl-[acyl-carrier-protein] reductase [NADH] 1 from Vibrio parahaemolyticus serotype O3:K6 (strain RIMD 2210633).